We begin with the raw amino-acid sequence, 76 residues long: Exodeoxyribonuclease 7 small subunit (76 aa).

It belongs to the XseB family. As to quaternary structure, heterooligomer composed of large and small subunits.

Its subcellular location is the cytoplasm. The catalysed reaction is Exonucleolytic cleavage in either 5'- to 3'- or 3'- to 5'-direction to yield nucleoside 5'-phosphates.. Bidirectionally degrades single-stranded DNA into large acid-insoluble oligonucleotides, which are then degraded further into small acid-soluble oligonucleotides. The chain is Exodeoxyribonuclease 7 small subunit from Geobacter sulfurreducens (strain ATCC 51573 / DSM 12127 / PCA).